Here is a 38-residue protein sequence, read N- to C-terminus: GVPTDVKCRGSPQCIQPCKDAGMRFGKCMNGKCHCTPK.

3 cysteine pairs are disulfide-bonded: cysteine 8-cysteine 28, cysteine 14-cysteine 33, and cysteine 18-cysteine 35.

This sequence belongs to the short scorpion toxin superfamily. Potassium channel inhibitor family. Alpha-KTx 03 subfamily. Expressed by the venom gland.

The protein resides in the secreted. In terms of biological role, blocks the voltage-gated potassium channel Kv1.3/KCNA3 (IC(50)=7.2 nM). Correnti and colleagues have also shown that this toxin inhibits Kv1.1/KCNA1, which is different from Abdel-Mottaleb and colleagues conclusions. The chain is Potassium channel toxin alpha-KTx 3.11 from Odontobuthus doriae (Yellow Iranian scorpion).